The following is a 248-amino-acid chain: Probable transcriptional regulatory protein Psyr_1407 (248 aa).

The protein belongs to the TACO1 family.

It is found in the cytoplasm. The protein is Probable transcriptional regulatory protein Psyr_1407 of Pseudomonas syringae pv. syringae (strain B728a).